The sequence spans 329 residues: MTENQKVYDITIIGGGPTGLFTAFYGGMRQASVKIIESLPQLGGQLSALYPEKYIYDVAGFPKVRAQELVDNLKEQMKKFDPTVCLEEAVDTLEKQADGIFKLVTNKQTHYSKSVIITAGNGAFQPRRLELEGTAKYEKKNLHYFVDDMNKFAGRRVVVFGGGDSAVDWTMMLEPIADKVTIAHRRDKFRAHEHSVESLMNSRAEVSTPYVPVELIGDDTIEQVVLQHVKTEEKIIIDVDDVIVNYGFVSSLGPIKNWGLDIQKNSILVNSKMETNIPGIYAAGDICTYEGKVKLIACGFGEAPTAVNNAKAYFDPNAKLQPMHSSSMF.

FAD contacts are provided by T18, E37, Q45, Y50, V90, F124, D285, and S326.

This sequence belongs to the ferredoxin--NADP reductase type 2 family. In terms of assembly, homodimer. Requires FAD as cofactor.

The enzyme catalyses 2 reduced [2Fe-2S]-[ferredoxin] + NADP(+) + H(+) = 2 oxidized [2Fe-2S]-[ferredoxin] + NADPH. The polypeptide is Ferredoxin--NADP reductase 2 (Bacillus mycoides (strain KBAB4) (Bacillus weihenstephanensis)).